Here is a 178-residue protein sequence, read N- to C-terminus: Nicotinamide-nucleotide adenylyltransferase (178 aa).

The protein belongs to the archaeal NMN adenylyltransferase family.

The protein resides in the cytoplasm. The enzyme catalyses beta-nicotinamide D-ribonucleotide + ATP + H(+) = diphosphate + NAD(+). It participates in cofactor biosynthesis; NAD(+) biosynthesis; NAD(+) from nicotinamide D-ribonucleotide: step 1/1. The sequence is that of Nicotinamide-nucleotide adenylyltransferase from Pyrobaculum aerophilum (strain ATCC 51768 / DSM 7523 / JCM 9630 / CIP 104966 / NBRC 100827 / IM2).